The sequence spans 664 residues: Serine/threonine-protein kinase PknD (664 aa).

At 1-381 the chain is on the cytoplasmic side; sequence MSDAVPQVGS…PAGNKRKVWA (381 aa). The 262-residue stretch at 15–276 folds into the Protein kinase domain; that stretch reads YQLLRLLGRG…DLAIAAHDAL (262 aa). Residues 21-29 and Lys44 each bind ATP; that span reads LGRGGMGEV. A Phosphothreonine; by autocatalysis modification is found at Thr135. Residue Asp138 is the Proton acceptor of the active site. A phosphothreonine; by autocatalysis mark is found at Thr169, Thr171, Thr173, and Thr209. Residues 303 to 333 are disordered; the sequence is TGLSQSESGIAGAGTGPPTPGAARWSPGDSA. The chain crosses the membrane as a helical span at residues 382–402; the sequence is VVGAAAIVLVAIVAAAGYLVL. Residues 403 to 664 lie on the Extracellular side of the membrane; that stretch reads RPSWSPTQAS…GNDRVVKLTS (262 aa). NHL repeat units follow at residues 414–456, 457–497, 498–539, 540–581, 582–623, and 624–664; these read QTVL…LATG, STGT…LAAG, SNNQ…LAAG, SKTQ…LEAE, SNNQ…LLAG, and STTS…KLTS.

It belongs to the protein kinase superfamily. Ser/Thr protein kinase family. As to quaternary structure, homodimer. The extracellular domain interacts with host laminin. Post-translationally, autophosphorylated. Dephosphorylated by PstP.

The protein resides in the cell membrane. It catalyses the reaction L-seryl-[protein] + ATP = O-phospho-L-seryl-[protein] + ADP + H(+). It carries out the reaction L-threonyl-[protein] + ATP = O-phospho-L-threonyl-[protein] + ADP + H(+). Dimerization activates the kinase domain of unphosphorylated PknD via an allosteric mechanism, triggering autophosphorylation and phosphorylation of target proteins. Phosphorylated PknD is fully active even in the absence of dimerization. In terms of biological role, part of a signaling pathway that enables adaptation to osmotic stress through cell wall remodeling and virulence factor production. Functionally, key microbial factor required for central nervous system tuberculosis. Required for invasion of host brain endothelia, but not macrophages, lung epithelia or other endothelia. This chain is Serine/threonine-protein kinase PknD (pknD), found in Mycobacterium tuberculosis (strain CDC 1551 / Oshkosh).